The sequence spans 335 residues: Probable cytosolic iron-sulfur protein assembly protein Ciao1 (335 aa).

WD repeat units follow at residues 12-51, 57-96, 101-140, 146-185, 192-231, 250-289, and 301-335; these read GHKG…WSTK, GHKR…FECN, GHEN…EFEC, AHTQ…SDWD, SHTS…NDAG, QHSR…KRDE, and AHEQ…KVDD.

It belongs to the WD repeat CIA1 family.

In terms of biological role, essential component of the cytosolic iron-sulfur (Fe/S) protein assembly machinery. Required for the maturation of extramitochondrial Fe/S proteins. The protein is Probable cytosolic iron-sulfur protein assembly protein Ciao1 of Drosophila pseudoobscura pseudoobscura (Fruit fly).